A 382-amino-acid polypeptide reads, in one-letter code: Dual-specificity RNA methyltransferase RlmN (382 aa).

Glu91 (proton acceptor) is an active-site residue. Residues 97-339 (ETDRGTLCIS…TTVRKTRGDD (243 aa)) form the Radical SAM core domain. Cys104 and Cys344 are disulfide-bonded. [4Fe-4S] cluster is bound by residues Cys111, Cys115, and Cys118. S-adenosyl-L-methionine is bound by residues 165–166 (GE), Ser197, 219–221 (SLH), and Asn301. Cys344 serves as the catalytic S-methylcysteine intermediate.

This sequence belongs to the radical SAM superfamily. RlmN family. Requires [4Fe-4S] cluster as cofactor.

It is found in the cytoplasm. The catalysed reaction is adenosine(2503) in 23S rRNA + 2 reduced [2Fe-2S]-[ferredoxin] + 2 S-adenosyl-L-methionine = 2-methyladenosine(2503) in 23S rRNA + 5'-deoxyadenosine + L-methionine + 2 oxidized [2Fe-2S]-[ferredoxin] + S-adenosyl-L-homocysteine. It carries out the reaction adenosine(37) in tRNA + 2 reduced [2Fe-2S]-[ferredoxin] + 2 S-adenosyl-L-methionine = 2-methyladenosine(37) in tRNA + 5'-deoxyadenosine + L-methionine + 2 oxidized [2Fe-2S]-[ferredoxin] + S-adenosyl-L-homocysteine. Functionally, specifically methylates position 2 of adenine 2503 in 23S rRNA and position 2 of adenine 37 in tRNAs. m2A2503 modification seems to play a crucial role in the proofreading step occurring at the peptidyl transferase center and thus would serve to optimize ribosomal fidelity. The polypeptide is Dual-specificity RNA methyltransferase RlmN (Polaromonas naphthalenivorans (strain CJ2)).